The primary structure comprises 347 residues: Eukaryotic translation initiation factor 3 subunit H (347 aa).

Positions 1 to 142 (MKIMKHCSQT…LRAFRLSPRF (142 aa)) constitute an MPN domain.

This sequence belongs to the eIF-3 subunit H family. As to quaternary structure, component of the eukaryotic translation initiation factor 3 (eIF-3) complex.

It is found in the cytoplasm. In terms of biological role, component of the eukaryotic translation initiation factor 3 (eIF-3) complex, which is involved in protein synthesis of a specialized repertoire of mRNAs and, together with other initiation factors, stimulates binding of mRNA and methionyl-tRNAi to the 40S ribosome. The eIF-3 complex specifically targets and initiates translation of a subset of mRNAs involved in cell proliferation. The sequence is that of Eukaryotic translation initiation factor 3 subunit H from Neosartorya fischeri (strain ATCC 1020 / DSM 3700 / CBS 544.65 / FGSC A1164 / JCM 1740 / NRRL 181 / WB 181) (Aspergillus fischerianus).